A 351-amino-acid polypeptide reads, in one-letter code: LIM/homeobox protein ceh-14 (351 aa).

LIM zinc-binding domains lie at 46-105 (AICS…KFGT) and 105-169 (TKCS…ARDK). A DNA-binding region (homeobox) is located at residues 180–239 (NKRPRTTISAKSLETLKQAYQTSSKPARHVREQLASETGLDMRVVQVWFQNRRAKEKRLK). The span at 238-254 (LKKDAGRRWKSSNRAES) shows a compositional bias: basic and acidic residues. Positions 238 to 268 (LKKDAGRRWKSSNRAESDSNSPIESINGQSP) are disordered. Polar residues predominate over residues 255-268 (DSNSPIESINGQSP).

As to quaternary structure, interacts (via LIM zinc-binding domains 1 and 2) with lim-7 (via LID domain). May interact with itself. May interact with homeobox protein ceh-63. Expressed in the anterior AFDL/R sensory neurons and BDUL/R and ALA interneurons, and in PVT, PVQL/R, DVC, PVNL/R, PVWL/R, PVR, PHCL/R, PHAL/R and PHBL/R cells in the tail region.

It localises to the nucleus. In terms of biological role, probable transcription factor, modulating expression of helix-loop-helix protein mbr-1 and homeobox protein ceh-63, perhaps acting in concert with ceh-63. Binds to a motif including the sequence 5'-CTAAT-3' in regulatory promoter elements. Confers thermosensory function to neurons. Required for correct AFD-mediated thermotaxis. In concert with homeobox protein ttx-1, perhaps as components in a complex, specifies identity of AFD neurons, acting by synergistically regulating receptor-type guanylyl cyclase gcy-8, gcy-18 and other genes. Involved in postembryonic differentiation of the ALA neuron, and regulation of genes that contribute to behavioral quiescence, a sleep-like behavior mediated by ALA. Regulates its own expression and also that of homeodomain ceh-17, together forming an autoregulatory loop in the ALA neuron. Required for initial pathfinding of the ALA axons, but largely dispensable for axon migration. Involved in regulating postembryonic axon maintenance in the ventral nerve cord, acting in concert with LIM homeobox protein lim-6, via modulation of expression of immunoglobulin domain zig genes in the interneuron PVT. Plays a role in controlling the peptidergic identity of the BDU neurons, regulating expression of flp-10, nlp-1, and nlp-15, thereby modulating the harsh touch response. The chain is LIM/homeobox protein ceh-14 (ceh-14) from Caenorhabditis elegans.